Here is a 188-residue protein sequence, read N- to C-terminus: Succinate dehydrogenase [ubiquinone] cytochrome b large subunit, mitochondrial (188 aa).

A mitochondrion-targeting transit peptide spans 1 to 31; sequence MSLLPYNATLCRVLRHNVKFIRSVQTSAARV. The Mitochondrial matrix portion of the chain corresponds to 32 to 69; the sequence is SAEKTPIQVWGWDYLMRQRALKRPIAPHLTIYKPQMTW. The helical transmembrane segment at 70-95 threads the bilayer; the sequence is MVSGLHRVTGCAMAGTLLIGGVGFSV. A rhodoquinol contacts are provided by serine 72 and arginine 76. Serine 72 and arginine 76 together coordinate a ubiquinone. Topologically, residues 96 to 113 are mitochondrial intermembrane; the sequence is LPLDFTTFVEFIRGLGIP. The chain crosses the membrane as a helical span at residues 114-140; the sequence is WVILDTFKFIIAFPIAFHTLNGIRFIG. Histidine 131 lines the heme b pocket. The Mitochondrial matrix segment spans residues 141-153; sequence FDMAKGTDIPSIY. Residues 154-176 form a helical membrane-spanning segment; it reads RGAYLVLGLAALISLAVVVYPRW. Topologically, residues 177 to 188 are mitochondrial intermembrane; the sequence is ERHKKATLPTNH.

Belongs to the cytochrome b558 family. In terms of assembly, component of the mitochondrial electron transport chain complex II composed of four subunits: a flavoprotein (Fp), an iron-sulfur protein (Ip), and a large cytochrome b (CybL) subunit and a small cytochrome b (CybS) subunit. There are 2 developmental stage-specific forms of complex II which have the Ip and CybL subunits in common. Complex II from the free-living larvae (aerobic environment) acts as a succinate dehydrogenase and is composed of the common subunit Ip and CybL and the stage specific subunits FpL and CybSL. Complex II from parasitic larvae and adults (anaerobic environment) acts as a fumarate reductase and is composed of the common subunit Ip and CybL and the stage specific subunits FpA and CybSA. It depends on heme b as a cofactor. In terms of tissue distribution, expressed in adult muscles (at protein level).

It is found in the mitochondrion inner membrane. It participates in carbohydrate metabolism; tricarboxylic acid cycle; fumarate from succinate (eukaryal route): step 1/1. Its function is as follows. Membrane-bound large subunit (CybL) of the mitochondrial electron transport chain complex II, which together with the membrane-bound small subunit (CybS), anchor the catalytic subunits to the inner mitochondria membrane. During the free-living egg-larvae stages, which occur in an aerobic environment, complex II acts as a succinate dehydrogenase by transferring electrons from succinate to ubiquinone. During the parasitic larvae and adult stages, which occur in an anaerobic environment, complex II acts as a fumarate reductase by transferring electrons from rhodoquinol to fumarate. This is Succinate dehydrogenase [ubiquinone] cytochrome b large subunit, mitochondrial from Ascaris suum (Pig roundworm).